Reading from the N-terminus, the 98-residue chain is Nucleoid-associated protein pc0477 (98 aa).

Belongs to the YbaB/EbfC family. In terms of assembly, homodimer.

It is found in the cytoplasm. Its subcellular location is the nucleoid. In terms of biological role, binds to DNA and alters its conformation. May be involved in regulation of gene expression, nucleoid organization and DNA protection. The sequence is that of Nucleoid-associated protein pc0477 from Protochlamydia amoebophila (strain UWE25).